An 86-amino-acid chain; its full sequence is Cell division topological specificity factor (86 aa).

It belongs to the MinE family.

Prevents the cell division inhibition by proteins MinC and MinD at internal division sites while permitting inhibition at polar sites. This ensures cell division at the proper site by restricting the formation of a division septum at the midpoint of the long axis of the cell. This Rhizobium rhizogenes (strain K84 / ATCC BAA-868) (Agrobacterium radiobacter) protein is Cell division topological specificity factor.